Consider the following 46-residue polypeptide: MLILFNTFAELPEAYKAFAPTVDVLPLIPLFFFLLVFVWQAAVGFK.

Positions 1–9 (MLILFNTFA) are excised as a propeptide. Residues 25–45 (LPLIPLFFFLLVFVWQAAVGF) form a helical membrane-spanning segment.

The protein belongs to the PsbK family. As to quaternary structure, PSII is composed of 1 copy each of membrane proteins PsbA, PsbB, PsbC, PsbD, PsbE, PsbF, PsbH, PsbI, PsbJ, PsbK, PsbL, PsbM, PsbT, PsbX, PsbY, Psb30/Ycf12, peripheral proteins PsbO, CyanoQ (PsbQ), PsbU, PsbV and a large number of cofactors. It forms dimeric complexes.

The protein resides in the cellular thylakoid membrane. Its function is as follows. One of the components of the core complex of photosystem II (PSII). PSII is a light-driven water:plastoquinone oxidoreductase that uses light energy to abstract electrons from H(2)O, generating O(2) and a proton gradient subsequently used for ATP formation. It consists of a core antenna complex that captures photons, and an electron transfer chain that converts photonic excitation into a charge separation. The sequence is that of Photosystem II reaction center protein K from Prochlorococcus marinus (strain MIT 9301).